A 160-amino-acid chain; its full sequence is Endoplasmic reticulum transmembrane protein 2 (160 aa).

The Lumenal segment spans residues M1–G2. A helical transmembrane segment spans residues V3 to V23. Residues L24–K45 are Cytoplasmic-facing. The chain crosses the membrane as a helical span at residues K46–W66. The Lumenal segment spans residues K67–N103. The chain crosses the membrane as a helical span at residues V104–L124. The Cytoplasmic portion of the chain corresponds to R125–F160. The short motif at K157–F160 is the Di-lysine motif element.

It belongs to the BCAP29/BCAP31 family.

It is found in the endoplasmic reticulum membrane. In terms of biological role, may play a role in anterograde transport of membrane proteins from the endoplasmic reticulum to the Golgi. The polypeptide is Endoplasmic reticulum transmembrane protein 2 (YET2) (Saccharomyces cerevisiae (strain ATCC 204508 / S288c) (Baker's yeast)).